Consider the following 256-residue polypeptide: Hemolymph lipopolysaccharide-binding protein (256 aa).

The first 21 residues, 1–21, serve as a signal peptide directing secretion; the sequence is MMNTRALLPLSVLLMATLCLC. The propeptide occupies 22-33; the sequence is ELPIPILQRFVR. An N-linked (GlcNAc...) asparagine glycan is attached at N56. A C-type lectin domain is found at 146–256; sequence IICQQEGGHL…KLPFVCEVEL (111 aa). 2 disulfide bridges follow: C148-C252 and C230-C244.

As to expression, hemolymph.

Its subcellular location is the secreted. Its function is as follows. Participates probably in the elimination of foreign substances invading the insect abdominal cavity, and in trapping intracellular symbionts, when they leak from the mycetomes into the hemolymph. This is Hemolymph lipopolysaccharide-binding protein from Periplaneta americana (American cockroach).